The following is a 152-amino-acid chain: Putative NrdI-like protein (152 aa).

This sequence belongs to the NrdI family.

The chain is Putative NrdI-like protein from Streptococcus pyogenes serotype M18 (strain MGAS8232).